Here is a 199-residue protein sequence, read N- to C-terminus: Recombination protein RecR (199 aa).

Residues 58–73 (CSVCNNITDVDPCVFC) form a C4-type zinc finger. The Toprim domain maps to 81 to 176 (RLVCVVEEPT…RLTRIATGVP (96 aa)).

This sequence belongs to the RecR family.

Functionally, may play a role in DNA repair. It seems to be involved in an RecBC-independent recombinational process of DNA repair. It may act with RecF and RecO. This is Recombination protein RecR from Acidobacterium capsulatum (strain ATCC 51196 / DSM 11244 / BCRC 80197 / JCM 7670 / NBRC 15755 / NCIMB 13165 / 161).